The chain runs to 551 residues: Probable metalloreductase AIM14 (551 aa).

A run of 7 helical transmembrane segments spans residues 25-45 (GIII…VKFI), 67-87 (PTWM…GANI), 100-117 (RYGR…YLIL), 138-155 (KWLS…AIGY), 172-192 (FLNF…IVSI), 199-221 (YYSL…IIFH), and 225-247 (GVTI…LRFY). One can recognise a Ferric oxidoreductase domain in the interval 102-217 (GRIAYCLLPL…NITAWSMVVL (116 aa)). An FAD-binding FR-type domain is found at 247 to 369 (YKSYPVNNLK…GGSGISFGLP (123 aa)). Residues 440-492 (QDESHAKVEQTQGEEEVDGLLNQDENGIPLQSMKKESFPKKEEGEDEEKSSKD) form a disordered region. A compositionally biased stretch (basic and acidic residues) spans 472-492 (MKKESFPKKEEGEDEEKSSKD).

It belongs to the ferric reductase (FRE) family. AIM14 subfamily.

Its subcellular location is the membrane. In terms of biological role, probable cell surface metalloreductase. May be involved in iron or copper homeostasis. This chain is Probable metalloreductase AIM14 (AIM14), found in Candida tropicalis (strain ATCC MYA-3404 / T1) (Yeast).